Consider the following 465-residue polypeptide: Cysteine--tRNA ligase (465 aa).

Residue cysteine 27 coordinates Zn(2+). The 'HIGH' region motif lies at 29 to 39 (PTVYDDAHLGH). The interval 153–173 (DISHKVSDDDTQSRVEHNSEK) is disordered. Positions 208, 237, and 241 each coordinate Zn(2+). The short motif at 269–273 (KMSKS) is the 'KMSKS' region element. Lysine 272 provides a ligand contact to ATP.

This sequence belongs to the class-I aminoacyl-tRNA synthetase family. As to quaternary structure, monomer. Requires Zn(2+) as cofactor.

It is found in the cytoplasm. It catalyses the reaction tRNA(Cys) + L-cysteine + ATP = L-cysteinyl-tRNA(Cys) + AMP + diphosphate. This chain is Cysteine--tRNA ligase, found in Sulfurovum sp. (strain NBC37-1).